Consider the following 201-residue polypeptide: Ribosomal RNA large subunit methyltransferase E (201 aa).

5 residues coordinate S-adenosyl-L-methionine: Gly40, Trp42, Asp62, Asp78, and Asp101. Catalysis depends on Lys141, which acts as the Proton acceptor.

It belongs to the class I-like SAM-binding methyltransferase superfamily. RNA methyltransferase RlmE family.

The protein resides in the cytoplasm. The enzyme catalyses uridine(2552) in 23S rRNA + S-adenosyl-L-methionine = 2'-O-methyluridine(2552) in 23S rRNA + S-adenosyl-L-homocysteine + H(+). In terms of biological role, specifically methylates the uridine in position 2552 of 23S rRNA at the 2'-O position of the ribose in the fully assembled 50S ribosomal subunit. The protein is Ribosomal RNA large subunit methyltransferase E of Anaplasma marginale (strain Florida).